The following is a 217-amino-acid chain: MGDILSRDTLYEAVREVLHGNQRKRRKFLETVELQISLKNYDPQKDKRFSGTVRLKSTPRPKFSVCVLGDQQHCDEAKAVDIPHMDIEALKKLNKNKKLVKKLAKKYDAFLASESLIKQIPRILGPGLNKAGKFPSLLTHNENMVAKVDEVKSTIKFQMKKVLCLAVAVGHVKMTDDELVYNIHLAVNFLVSLLKKNWQNVRALYIKSTMGKPQRLY.

Residue Tyr11 is modified to Phosphotyrosine. Residues Lys91 and Lys106 each carry the N6-acetyllysine modification. The residue at position 118 (Lys118) is an N6-acetyllysine; alternate. Lys118 is covalently cross-linked (Glycyl lysine isopeptide (Lys-Gly) (interchain with G-Cter in SUMO1); alternate). Residue Lys118 forms a Glycyl lysine isopeptide (Lys-Gly) (interchain with G-Cter in SUMO2); alternate linkage. A Glycyl lysine isopeptide (Lys-Gly) (interchain with G-Cter in SUMO2) cross-link involves residue Lys161.

Belongs to the universal ribosomal protein uL1 family. In terms of assembly, component of the large ribosomal subunit.

Its subcellular location is the cytoplasm. Its function is as follows. Component of the large ribosomal subunit. The ribosome is a large ribonucleoprotein complex responsible for the synthesis of proteins in the cell. In Oryctolagus cuniculus (Rabbit), this protein is Large ribosomal subunit protein uL1 (RPL10A).